A 485-amino-acid polypeptide reads, in one-letter code: Velvet complex subunit B (485 aa).

The Velvet domain maps to 33–459 (GRKHYSLEVV…GNQGQKLPLA (427 aa)). The segment at 107-353 (VLHPSSVDRH…PPPPRHTYTR (247 aa)) is disordered. Polar residues-rich tracts occupy residues 134–155 (APQSRAPANQTPSGGSTPTLSQ), 234–243 (RSPSSSTSDH), 267–304 (SISSYSNSQVDPSVRNHSNSEGIENPGWSSSEATSPHS), and 326–341 (THSQMAPGTCSSQHVS).

It belongs to the velvet family. VelB subfamily. In terms of assembly, component of the heterotrimeric velvet complex composed of laeA, veA and velB; VeA acting as a bridging protein between laeA and velB. Forms a heterodimeric complex with vosA; the formation of the velB-vosA complex is light-dependent.

Its subcellular location is the nucleus. It is found in the cytoplasm. Its function is as follows. Component of the velvet transcription factor complex that controls sexual/asexual developmental ratio in response to light, promoting sexual development in the darkness while stimulating asexual sporulation under illumination. The velvet complex acts as a global regulator for secondary metabolite gene expression. Component of the velB-VosA heterodimeric complex that plays a dual role in activating genes associated with spore maturation and repressing certain development-associated genes. The velB-VosA complex binds DNA through the DNA-binding domain of vosA that recognizes an 11-nucleotide consensus sequence 5'-CTGGCCGCGGC-3' consisting of two motifs in the promoters of key developmental regulatory genes. The protein is Velvet complex subunit B of Laccaria bicolor (strain S238N-H82 / ATCC MYA-4686) (Bicoloured deceiver).